Here is a 186-residue protein sequence, read N- to C-terminus: MKINGNEIRPGNVIEHEGGLWVAVKTNAVKPGKGGAYNQVELKNLINGTKLNERFRAAESVERVRLEQKDFSFLYEQGEALIFMDTETYEQLELQKDFVGDRAAFLQDGMMVTVELYEEKPIGIRLPDQVTLAITEADPVVKGQTAASSYKPAVLENGIRIPVPPFIASGERVIVDTNELTYISRA.

The protein belongs to the elongation factor P family.

It localises to the cytoplasm. It functions in the pathway protein biosynthesis; polypeptide chain elongation. Functionally, involved in peptide bond synthesis. Stimulates efficient translation and peptide-bond synthesis on native or reconstituted 70S ribosomes in vitro. Probably functions indirectly by altering the affinity of the ribosome for aminoacyl-tRNA, thus increasing their reactivity as acceptors for peptidyl transferase. This Brucella abortus (strain S19) protein is Elongation factor P.